The primary structure comprises 365 residues: Carbohydrate sulfotransferase 10 (365 aa).

The Cytoplasmic segment spans residues 1-6; the sequence is MRRHWL. A helical; Signal-anchor for type II membrane protein membrane pass occupies residues 7 to 27; that stretch reads LVGACGWVLLILMFVSKFINF. At 28–356 the chain is on the lumenal side; that stretch reads SFRIPGDYAG…RYQGDFSLFD (329 aa). N-linked (GlcNAc...) asparagine glycosylation is found at Asn99 and Asn104. Residues 132–138 and 194–202 each bind 3'-phosphoadenylyl sulfate; these read PKVGNTQ and RDPFERLIS. N-linked (GlcNAc...) asparagine glycosylation occurs at Asn325.

It belongs to the sulfotransferase 2 family.

Its subcellular location is the golgi apparatus membrane. In terms of biological role, catalyzes the transfer of sulfate to position 3 of terminal glucuronic acid of both protein- and lipid-linked oligosaccharides. Participates in biosynthesis of HNK-1 carbohydrate structure, a sulfated glucuronyl-lactosaminyl residue carried by many neural recognition molecules. In Danio rerio (Zebrafish), this protein is Carbohydrate sulfotransferase 10 (chst10).